The primary structure comprises 133 residues: Putative nickel-responsive regulator (133 aa).

Residues H74, H85, H87, and C93 each coordinate Ni(2+).

It belongs to the transcriptional regulatory CopG/NikR family. It depends on Ni(2+) as a cofactor.

Functionally, transcriptional regulator. The chain is Putative nickel-responsive regulator from Saccharolobus solfataricus (strain ATCC 35092 / DSM 1617 / JCM 11322 / P2) (Sulfolobus solfataricus).